An 897-amino-acid chain; its full sequence is MVLAQGLLSMALLALCWERSLAGAEETIPLQTLRCYNDYTSHITCRWADTQDAQRLVNVTLIRRVNEDLLEPVSCDLSDDMPWSACPHPRCVPRRCVIPCQSFVVTDVDYFSFQPDRPLGTRLTVTLTQHVQPPEPRDLQISTDQDHFLLTWSVALGSPQSHWLSPGDLEFEVVYKRLQDSWEDAAILLSNTSQATLGPEHLMPSSTYVARVRTRLAPGSRLSGRPSKWSPEVCWDSQPGDEAQPQNLECFFDGAAVLSCSWEVRKEVASSVSFGLFYKPSPDAGEEECSPVLREGLGSLHTRHHCQIPVPDPATHGQYIVSVQPRRAEKHIKSSVNIQMAPPSLNVTKDGDSYSLRWETMKMRYEHIDHTFEIQYRKDTATWKDSKTETLQNAHSMALPALEPSTRYWARVRVRTSRTGYNGIWSEWSEARSWDTESVLPMWVLALIVIFLTIAVLLALRFCGIYGYRLRRKWEEKIPNPSKSHLFQNGSAELWPPGSMSAFTSGSPPHQGPWGSRFPELEGVFPVGFGDSEVSPLTIEDPKHVCDPPSGPDTTPAASDLPTEQPPSPQPGPPAASHTPEKQASSFDFNGPYLGPPHSRSLPDILGQPEPPQEGGSQKSPPPGSLEYLCLPAGGQVQLVPLAQAMGPGQAVEVERRPSQGAAGSPSLESGGGPAPPALGPRVGGQDQKDSPVAIPMSSGDTEDPGVASGYVSSADLVFTPNSGASSVSLVPSLGLPSDQTPSLCPGLASGPPGAPGPVKSGFEGYVELPPIEGRSPRSPRNNPVPPEAKSPVLNPGERPADVSPTSPQPEGLLVLQQVGDYCFLPGLGPGPLSLRSKPSSPGPGPEIKNLDQAFQVKKPPGQAVPQVPVIQLFKALKQQDYLSLPPWEVNKPGEVC.

The N-terminal stretch at 1 to 16 (MVLAQGLLSMALLALC) is a signal peptide. Over 17–443 (WERSLAGAEE…WDTESVLPMW (427 aa)) the chain is Extracellular. C35 and C45 are joined by a disulfide. The N-linked (GlcNAc...) asparagine glycan is linked to N58. 2 disulfides stabilise this stretch: C75–C96 and C86–C91. Residues 133 to 240 (PPEPRDLQIS…PEVCWDSQPG (108 aa)) form the Fibronectin type-III 1 domain. N191 carries N-linked (GlcNAc...) asparagine glycosylation. 2 disulfide bridges follow: C250-C260 and C289-C306. Residues 339–436 (QMAPPSLNVT…EWSEARSWDT (98 aa)) form the Fibronectin type-III 2 domain. N-linked (GlcNAc...) asparagine glycosylation occurs at N346. A WSXWS motif motif is present at residues 425 to 429 (WSEWS). The helical transmembrane segment at 444–460 (VLALIVIFLTIAVLLAL) threads the bilayer. Topologically, residues 461–897 (RFCGIYGYRL…WEVNKPGEVC (437 aa)) are cytoplasmic. Residues 474-482 (WEEKIPNPS) carry the Box 1 motif motif. Disordered stretches follow at residues 498–517 (GSMS…WGSR), 532–630 (SEVS…EYLC), 648–812 (PGQA…QPEG), and 830–849 (PGPL…PEIK). The span at 564 to 574 (EQPPSPQPGPP) shows a compositional bias: pro residues. Positions 723 to 752 (SGASSVSLVPSLGLPSDQTPSLCPGLASGP) are enriched in low complexity. At Y766 the chain carries Phosphotyrosine. Residues 830 to 840 (PGPLSLRSKPS) are compositionally biased toward low complexity.

The protein belongs to the type I cytokine receptor family. Type 4 subfamily. As to quaternary structure, heterodimer of an alpha and a beta subunit. The beta subunit is common to the IL3, IL5 and GM-CSF receptors. The signaling GM-CSF receptor complex is a dodecamer of two head-to-head hexamers of two alpha, two beta, and two ligand subunits. Interacts with TMEM102; this interaction occurs preferentially in the absence of CSF2. Interacts with FCER1G; this interaction is direct. Interacts with LYN. Interacts with JAK1. May be phosphorylated by LYN.

The protein localises to the membrane. In terms of biological role, cell surface receptor that plays a role in immune response and controls the production and differentiation of hematopoietic progenitor cells into lineage-restricted cells. Acts by forming an heterodimeric receptor through interaction with different partners such as IL3RA, IL5RA or CSF2RA. In turn, participates in various signaling pathways including interleukin-3, interleukin-5 and granulocyte-macrophage colony-stimulating factor/CSF2 pathways. In unstimulated conditions, interacts constitutively with JAK1 and ligand binding leads to JAK1 stimulation and subsequent activation of the JAK-STAT pathway. In Homo sapiens (Human), this protein is Cytokine receptor common subunit beta (CSF2RB).